A 255-amino-acid polypeptide reads, in one-letter code: Ras-like protein family member 12 (255 aa).

Residues 30–37 (GAMGSGKS), 77–81 (DTADQ), and 137–140 (NKVD) each bind GTP.

This sequence belongs to the small GTPase superfamily. Ras family.

The catalysed reaction is GTP + H2O = GDP + phosphate + H(+). The sequence is that of Ras-like protein family member 12 (RASL12) from Danio rerio (Zebrafish).